The sequence spans 323 residues: Fos-related antigen 2 (323 aa).

Residues 1–27 (MYQDYPGSFDTSSRGSSGSPGHPEPYS) show a composition bias toward low complexity. The disordered stretch occupies residues 1 to 31 (MYQDYPGSFDTSSRGSSGSPGHPEPYSAGAA). Residues 124 to 187 (EEKRRIRRER…EKLEFMLVAH (64 aa)) enclose the bZIP domain. The interval 126 to 128 (KRR) is basic motif. The interval 129 to 136 (IRRERNKL) is leucine-zipper. 2 disordered regions span residues 194-214 (SPEERRSPPTSSLQSVRTGAS) and 288-323 (ESPLSPSESCSKAHRRSSSSGDQSSDSLNSPTLLAL). A compositionally biased stretch (low complexity) spans 305–317 (SSSGDQSSDSLNS).

The protein belongs to the bZIP family. Fos subfamily. In terms of assembly, heterodimer with JUN.

It is found in the nucleus. This chain is Fos-related antigen 2 (FOSL2), found in Gallus gallus (Chicken).